Consider the following 261-residue polypeptide: uncharacterized protein (261 aa).

The 61-residue stretch at 15–75 folds into the HTH tetR-type domain; that stretch reads SINPEDIISG…AMTDRALSKY (61 aa). Positions 38-57 form a DNA-binding region, H-T-H motif; that stretch reads SMPLLGKHLGVGVTSIYWYF. The disordered stretch occupies residues 234–261; it reads AAGEVAVRRPTATADAPTPGARAKAVAR. Over residues 241–261 the composition is skewed to low complexity; it reads RRPTATADAPTPGARAKAVAR.

This is an uncharacterized protein from Mycobacterium bovis (strain ATCC BAA-935 / AF2122/97).